We begin with the raw amino-acid sequence, 310 residues long: MASRDFLGRFGGEKGASSDKAGGGAGEPDEVVELSLGLSLGGCFGANSGRDAKKPRLVRSSSLAAMCSLPGTSDDIAAATPPPAPLMRTSSLPTETEEERWRRREMQSLKRLQAKRKRLERRTSMNSGKSGGSSSRDDAQEPLYPSAFQLRRSVVDQGNASSSMPEQGSGDGAEAKSTSSMEISSDNNNQNKSLPPPAPSTAGKLPNGIVKEQPPLRTLRSLTMRTTSTGDLRKSMMEDMPIVSSKVDGPNSKKIDGFLYKYRKGEEVRIVCVCHGNFLTPAEFVKHAGGGDVTNPLRHIVVNPSPSVFL.

Disordered stretches follow at residues 1–29 (MASR…GEPD), 68–140 (SLPG…DDAQ), and 156–215 (DQGN…EQPP). Basic and acidic residues predominate over residues 99-108 (ERWRRREMQS). 2 stretches are compositionally biased toward polar residues: residues 156–166 (DQGNASSSMPE) and 176–193 (KSTS…QNKS).

Belongs to the Ninja family.

It localises to the nucleus. This Triticum aestivum (Wheat) protein is Ninja-family protein 3 (AFP-D1).